Reading from the N-terminus, the 342-residue chain is Isopentenyl-diphosphate delta-isomerase (342 aa).

6–7 (RK) serves as a coordination point for substrate. Residues S63, 64-66 (SMT), S94, and N122 each bind FMN. 94-96 (SMR) contributes to the substrate binding site. Substrate is bound at residue Q157. E158 provides a ligand contact to Mg(2+). FMN is bound by residues K189, T219, 269–271 (GLK), and 290–291 (AG).

This sequence belongs to the IPP isomerase type 2 family. Homooctamer. Dimer of tetramers. FMN serves as cofactor. The cofactor is NADPH. Mg(2+) is required as a cofactor.

It is found in the cytoplasm. The catalysed reaction is isopentenyl diphosphate = dimethylallyl diphosphate. Its function is as follows. Involved in the biosynthesis of isoprenoids. Catalyzes the 1,3-allylic rearrangement of the homoallylic substrate isopentenyl (IPP) to its allylic isomer, dimethylallyl diphosphate (DMAPP). This chain is Isopentenyl-diphosphate delta-isomerase, found in Rickettsia bellii (strain RML369-C).